Reading from the N-terminus, the 1098-residue chain is Beta-alanine-activating enzyme (1098 aa).

ATP-binding positions include Thr-198 to Lys-206, Asp-428, Arg-442, and Lys-527. One can recognise a Carrier domain in the interval Glu-553–Val-630. Ser-589 bears the O-(pantetheine 4'-phosphoryl)serine mark. 2 positions are modified to phosphoserine: Ser-649 and Ser-724.

This sequence belongs to the ATP-dependent AMP-binding enzyme family. In terms of tissue distribution, ubiquitously expressed in adult tissues.

Its function is as follows. Covalently binds beta-alanine in an ATP-dependent manner to form a thioester bond with its phosphopantetheine group and transfers it to an, as yet, unknown acceptor. May be required for a post-translational protein modification or for post-transcriptional modification of an RNA. This chain is Beta-alanine-activating enzyme (AASDH), found in Homo sapiens (Human).